A 284-amino-acid chain; its full sequence is Formate channel FocA (284 aa).

Topologically, residues 1–34 (MASENQKLSSVALTPVEATDYAENTATYKANKRP) are cytoplasmic. A helical membrane pass occupies residues 35-55 (FLSFMSGISAGACIALAFVFY). The Periplasmic portion of the chain corresponds to 56 to 72 (TTTQTASAGAPWGLTKL). The chain crosses the membrane as a helical span at residues 73–93 (VGGLVFSLGVIMVVILGSELF). Topologically, residues 94 to 116 (TSSTLTLVARVGGRITTTQMIRN) are cytoplasmic. A helical membrane pass occupies residues 117–137 (WIVVYLGNFVGGLFIAAVIWF). At 138-163 (SGQTMAANGQWGLTILATAQHKIHHT) the chain is on the periplasmic side. Residues 164-184 (WFEAFNLGILCNIMVCVAVWM) form a helical membrane-spanning segment. The Cytoplasmic segment spans residues 185–194 (SYSGKTVTDK). A helical membrane pass occupies residues 195–215 (AFIMIMPIGLFVASGFEHCVA). Residues 216-252 (NMFMIPMGIITAHFSTPEFWQQIGVDPMKYADLDLYH) are Periplasmic-facing. The chain crosses the membrane as a helical span at residues 253–273 (FIVKNLIPVTLGNIVGGAICI). Topologically, residues 274 to 284 (GVFQRYLTKTH) are cytoplasmic.

It belongs to the FNT transporter (TC 1.A.16) family. As to quaternary structure, homopentamer.

The protein localises to the cell inner membrane. The catalysed reaction is formate(in) = formate(out). Functionally, involved in the bidirectional transport of formate during mixed-acid fermentation. Functions to maintain relatively constant intracellular formate levels during growth, using different mechanisms for efflux and uptake of the anion. The protein is Formate channel FocA (focA) of Haemophilus influenzae (strain ATCC 51907 / DSM 11121 / KW20 / Rd).